Consider the following 456-residue polypeptide: Signal transduction histidine-protein kinase ArlS (456 aa).

2 helical membrane passes run 13 to 33 and 157 to 177; these read LITTLITFTTILLFCLIIIFF and IVALAFGLIATIITAGVSYIF. Residues 179–232 enclose the HAMP domain; that stretch reads SQITKPIVTMSNKMNQIRRDGFQNKLELTTNYEETDNLIDTFNEMMYQIEESFN. The region spanning 240–456 is the Histidine kinase domain; it reads DASHELRTPL…TFKISFPVLN (217 aa). His-243 bears the Phosphohistidine; by autocatalysis mark.

In terms of processing, autophosphorylated.

The protein resides in the cell membrane. It carries out the reaction ATP + protein L-histidine = ADP + protein N-phospho-L-histidine.. Member of the two-component regulatory system ArlS/ArlR. ArlS probably functions as a sensor protein kinase which is autophosphorylated at a histidine residue and transfers its phosphate group to ArlR. This chain is Signal transduction histidine-protein kinase ArlS (arlS), found in Staphylococcus epidermidis (strain ATCC 12228 / FDA PCI 1200).